The primary structure comprises 208 residues: Porimin (208 aa).

An N-terminal signal peptide occupies residues 1–26; that stretch reads MGLGARGAWAALLLGTLQVLALLGAA. The Extracellular portion of the chain corresponds to 27–166; the sequence is HESAAMAASA…EAKKGSKFDT (140 aa). Residues 42 to 57 show a composition bias toward polar residues; it reads GLPHNSSANSTETLQH. Residues 42–125 are disordered; the sequence is GLPHNSSANS…PKTTSVSQNT (84 aa). Asn-46, Asn-50, Asn-64, Asn-68, Asn-83, Asn-96, and Asn-106 each carry an N-linked (GlcNAc...) asparagine glycan. Polar residues predominate over residues 65-107; sequence ETSNSTVKPPTSVASDSSNTTVTTMKPTAASNTTTPGMVSTNM. Low complexity predominate over residues 108–122; sequence TSTTLKSTPKTTSVS. N-linked (GlcNAc...) asparagine glycosylation is found at Asn-124 and Asn-138. Residues 167–187 traverse the membrane as a helical segment; it reads GSFVGGIVLTLGVLSILYIGC. At 188–208 the chain is on the cytoplasmic side; that stretch reads KMYYSRRGIRYRTIDEHDAII.

It belongs to the CD164 family. As to expression, ubiquitous. Not expressed in ovary. Expressed in keratinocytes.

The protein localises to the membrane. In terms of biological role, implicated in oncotic cell death, characterized by cell swelling, organelle swelling, vacuolization and increased membrane permeability. The polypeptide is Porimin (TMEM123) (Homo sapiens (Human)).